A 132-amino-acid polypeptide reads, in one-letter code: Large ribosomal subunit protein bL17 (132 aa).

This sequence belongs to the bacterial ribosomal protein bL17 family. In terms of assembly, part of the 50S ribosomal subunit. Contacts protein L32.

This Shewanella sediminis (strain HAW-EB3) protein is Large ribosomal subunit protein bL17.